The following is a 246-amino-acid chain: tRNA pseudouridine synthase A (246 aa).

Aspartate 52 serves as the catalytic Nucleophile. Residue tyrosine 111 participates in substrate binding.

It belongs to the tRNA pseudouridine synthase TruA family. In terms of assembly, homodimer.

The catalysed reaction is uridine(38/39/40) in tRNA = pseudouridine(38/39/40) in tRNA. In terms of biological role, formation of pseudouridine at positions 38, 39 and 40 in the anticodon stem and loop of transfer RNAs. The polypeptide is tRNA pseudouridine synthase A (Borreliella burgdorferi (strain ATCC 35210 / DSM 4680 / CIP 102532 / B31) (Borrelia burgdorferi)).